A 265-amino-acid polypeptide reads, in one-letter code: Gamma-secretase subunit APH-1A (265 aa).

The Lumenal segment spans residues 1–2 (MG). A helical transmembrane segment spans residues 3-23 (AAVFFGCTFVAFGPAFALFLI). Residues 24–31 (TVAGDPLR) lie on the Cytoplasmic side of the membrane. A helical membrane pass occupies residues 32-52 (VIILVAGAFFWLVSLLLASVV). Over 53–68 (WFILVHVTDRSDARLQ) the chain is Lumenal. The helical transmembrane segment at 69-89 (YGLLIFGAAVSVLLQEVFRFA) threads the bilayer. The Cytoplasmic portion of the chain corresponds to 90-118 (YYKLLKKADEGLASLSEDGRSPISIRQMA). Residues 119 to 139 (YVSGLSFGIISGVFSVINILA) traverse the membrane as a helical segment. Residues 140–158 (DALGPGVVGIHGDSPYYFL) are Lumenal-facing. The chain crosses the membrane as a helical span at residues 159 to 179 (TSAFLTAAIILLHTFWGVVFF). The Cytoplasmic portion of the chain corresponds to 180–186 (DACERRR). Residues 187-207 (YWALGLVVGSHLLTSGLTFLN) traverse the membrane as a helical segment. Residues 208–213 (PWYEAS) are Lumenal-facing. The chain crosses the membrane as a helical span at residues 214–234 (LLPIYAVTVSMGLWAFITAGG). Topologically, residues 235-265 (SLRSIQRSLLCRRQEDSRVMVYSALRIPPED) are cytoplasmic.

It belongs to the APH-1 family. As to quaternary structure, the functional gamma-secretase complex is composed of at least four polypeptides: a presenilin homodimer (PSEN1 or PSEN2), nicastrin (NCSTN), APH1 (APH1A or APH1B) and PSENEN/PEN2. Widely expressed. Expressed in leukocytes, lung, placenta, small intestine, liver, kidney, spleen thymus, skeletal muscle, heart and brain. Isoform 1 and isoform 2 are nearly expressed at the same level.

The protein localises to the endoplasmic reticulum membrane. It is found in the golgi apparatus. The protein resides in the golgi stack membrane. In terms of biological role, non-catalytic subunit of the gamma-secretase complex, an endoprotease complex that catalyzes the intramembrane cleavage of integral membrane proteins such as Notch receptors and APP (amyloid-beta precursor protein). Required for normal gamma-secretase assembly. The gamma-secretase complex plays a role in Notch and Wnt signaling cascades and regulation of downstream processes via its role in processing key regulatory proteins, and by regulating cytosolic CTNNB1 levels. In Homo sapiens (Human), this protein is Gamma-secretase subunit APH-1A (APH1A).